The following is a 199-amino-acid chain: Recombination protein RecR (199 aa).

Residues Cys-57–Cys-72 form a C4-type zinc finger. The Toprim domain occupies Ser-80–Ser-176.

It belongs to the RecR family.

May play a role in DNA repair. It seems to be involved in an RecBC-independent recombinational process of DNA repair. It may act with RecF and RecO. The sequence is that of Recombination protein RecR from Limosilactobacillus fermentum (strain NBRC 3956 / LMG 18251) (Lactobacillus fermentum).